A 99-amino-acid chain; its full sequence is Nucleoid-associated protein SUB1611 (99 aa).

The protein belongs to the YbaB/EbfC family. Homodimer.

The protein localises to the cytoplasm. It is found in the nucleoid. Binds to DNA and alters its conformation. May be involved in regulation of gene expression, nucleoid organization and DNA protection. The protein is Nucleoid-associated protein SUB1611 of Streptococcus uberis (strain ATCC BAA-854 / 0140J).